The following is a 190-amino-acid chain: Cancer-related nucleoside-triphosphatase (190 aa).

Alanine 2 is subject to N-acetylalanine. Residues glycine 9–threonine 16 and valine 109–glycine 116 contribute to the ATP site. Lysine 165 is modified (N6-acetyllysine).

Belongs to the THEP1 NTPase family. In terms of assembly, monomer.

It carries out the reaction a ribonucleoside 5'-triphosphate + H2O = a ribonucleoside 5'-diphosphate + phosphate + H(+). The enzyme catalyses 5-methyl-UTP + H2O = 5-methyl-UDP + phosphate + H(+). It catalyses the reaction CTP + H2O = CDP + phosphate + H(+). The catalysed reaction is ATP + H2O = ADP + phosphate + H(+). It carries out the reaction GTP + H2O = GDP + phosphate + H(+). Has nucleotide phosphatase activity towards ATP, GTP, CTP, TTP and UTP. Hydrolyzes nucleoside diphosphates with lower efficiency. The protein is Cancer-related nucleoside-triphosphatase of Homo sapiens (Human).